Reading from the N-terminus, the 123-residue chain is Small ribosomal subunit protein uS12 (123 aa).

D89 is modified (3-methylthioaspartic acid). A disordered region spans residues 104–123; that stretch reads TQGVKDRRQRRSKYGAKRPK. Over residues 110-123 the composition is skewed to basic residues; it reads RRQRRSKYGAKRPK.

Belongs to the universal ribosomal protein uS12 family. In terms of assembly, part of the 30S ribosomal subunit. Contacts proteins S8 and S17. May interact with IF1 in the 30S initiation complex.

Its function is as follows. With S4 and S5 plays an important role in translational accuracy. Functionally, interacts with and stabilizes bases of the 16S rRNA that are involved in tRNA selection in the A site and with the mRNA backbone. Located at the interface of the 30S and 50S subunits, it traverses the body of the 30S subunit contacting proteins on the other side and probably holding the rRNA structure together. The combined cluster of proteins S8, S12 and S17 appears to hold together the shoulder and platform of the 30S subunit. This chain is Small ribosomal subunit protein uS12, found in Parvibaculum lavamentivorans (strain DS-1 / DSM 13023 / NCIMB 13966).